The chain runs to 471 residues: MSVLKEYRTVSEVVGPLMIVDQVAGVHYNELVDITLHNGARRKGQVLEVQGDKAMVQLFEGSTGINLAKTKVRFTGHPLELAVSEDMVGRIFDGMGQPIDGGPELIPEKYLDIDGQAINPVARDYPDEFIQTGISAIDHLNTLVRGQKLPVFSGSGLPHNELAAQIARQATVLNSDDNFAVVFAAMGITFEEAEFFMNDLRETGAIDRSVLFINLANDPAIERIATPRIALTTAEYLAYEKGMHVLVIMTDMTNYCEALREVSAARREVPGRRGYPGYLYTNLSTLYERAGRLIGKKGSVTQIPILTMPEDDITHPIPDLTGYITEGQIILSQELYKNGFRPPINVLPSLSRLKDKGSGEGKTRQDHAATMNQLFAAYAQGKQAKELAVVLGESALSETDKLYVAFTNRFEEEYINQGFYTNRSIEESLDLGWELLSILPRTELKRIKDDMLDRYLPKADTTMTKVFVAND.

It belongs to the ATPase alpha/beta chains family.

Produces ATP from ADP in the presence of a proton gradient across the membrane. The V-type beta chain is a regulatory subunit. This Streptococcus pyogenes serotype M18 (strain MGAS8232) protein is V-type ATP synthase beta chain.